We begin with the raw amino-acid sequence, 464 residues long: Uronate isomerase (464 aa).

It belongs to the metallo-dependent hydrolases superfamily. Uronate isomerase family.

It carries out the reaction D-glucuronate = D-fructuronate. The enzyme catalyses aldehydo-D-galacturonate = keto-D-tagaturonate. The protein operates within carbohydrate metabolism; pentose and glucuronate interconversion. This is Uronate isomerase from Caldicellulosiruptor saccharolyticus (strain ATCC 43494 / DSM 8903 / Tp8T 6331).